The sequence spans 299 residues: Bifunctional protein FolD (299 aa).

Residues 168–170 (GRS), serine 193, and isoleucine 234 contribute to the NADP(+) site.

Belongs to the tetrahydrofolate dehydrogenase/cyclohydrolase family. In terms of assembly, homodimer.

It catalyses the reaction (6R)-5,10-methylene-5,6,7,8-tetrahydrofolate + NADP(+) = (6R)-5,10-methenyltetrahydrofolate + NADPH. The catalysed reaction is (6R)-5,10-methenyltetrahydrofolate + H2O = (6R)-10-formyltetrahydrofolate + H(+). It functions in the pathway one-carbon metabolism; tetrahydrofolate interconversion. In terms of biological role, catalyzes the oxidation of 5,10-methylenetetrahydrofolate to 5,10-methenyltetrahydrofolate and then the hydrolysis of 5,10-methenyltetrahydrofolate to 10-formyltetrahydrofolate. The protein is Bifunctional protein FolD of Agrobacterium fabrum (strain C58 / ATCC 33970) (Agrobacterium tumefaciens (strain C58)).